The following is a 189-amino-acid chain: Nucleoside triphosphate pyrophosphatase (189 aa).

D70 (proton acceptor) is an active-site residue.

Belongs to the Maf family. A divalent metal cation is required as a cofactor.

It is found in the cytoplasm. The enzyme catalyses a ribonucleoside 5'-triphosphate + H2O = a ribonucleoside 5'-phosphate + diphosphate + H(+). It carries out the reaction a 2'-deoxyribonucleoside 5'-triphosphate + H2O = a 2'-deoxyribonucleoside 5'-phosphate + diphosphate + H(+). Its function is as follows. Nucleoside triphosphate pyrophosphatase. May have a dual role in cell division arrest and in preventing the incorporation of modified nucleotides into cellular nucleic acids. In Xylella fastidiosa (strain M23), this protein is Nucleoside triphosphate pyrophosphatase.